The following is a 302-amino-acid chain: Acidic endochitinase (302 aa).

Residues 1-30 form the signal peptide; it reads MTNMTLRKHVIYFLFFISCSLSKPSDASRG. The GH18 domain occupies 31 to 302; that stretch reads GIAIYWGQNG…GYSSSILASV (272 aa). 2 disulfide bridges follow: C49-C96 and C79-C86. The active-site Proton donor is E156. An intrachain disulfide couples C188 to C217.

It belongs to the glycosyl hydrolase 18 family. Chitinase class III subfamily.

It localises to the secreted. The protein resides in the extracellular space. It carries out the reaction Random endo-hydrolysis of N-acetyl-beta-D-glucosaminide (1-&gt;4)-beta-linkages in chitin and chitodextrins.. Functionally, this protein functions as a defense against chitin containing fungal pathogens. The polypeptide is Acidic endochitinase (CHIB1) (Arabidopsis thaliana (Mouse-ear cress)).